The following is a 272-amino-acid chain: Expansin-B16 (272 aa).

The first 25 residues, 1–25 (MAAFSSSSSAPMLIRSVLFVSLLSA), serve as a signal peptide directing secretion. The region spanning 63–173 (GGACGYGTLV…RRTACKYGGK (111 aa)) is the Expansin-like EG45 domain. Cystine bridges form between Cys-66–Cys-95, Cys-98–Cys-168, and Cys-103–Cys-109. The region spanning 186 to 267 (FWLSLLVEFE…NWTPKATYTS (82 aa)) is the Expansin-like CBD domain.

Belongs to the expansin family. Expansin B subfamily.

The protein localises to the secreted. It localises to the cell wall. The protein resides in the membrane. In terms of biological role, may cause loosening and extension of plant cell walls by disrupting non-covalent bonding between cellulose microfibrils and matrix glucans. No enzymatic activity has been found. May be required for rapid internodal elongation in deepwater rice during submergence. The protein is Expansin-B16 (EXPB16) of Oryza sativa subsp. japonica (Rice).